A 796-amino-acid polypeptide reads, in one-letter code: Nuclear GTPase SLIP-GC (796 aa).

Basic and acidic residues predominate over residues 1–22; it reads MAETKDVFGQEPHPVEDDLYKE. The segment at 1-35 is disordered; sequence MAETKDVFGQEPHPVEDDLYKERTRKRRKSDRDQR. 107–114 provides a ligand contact to GTP; that stretch reads GSTGAGKS. 2 coiled-coil regions span residues 158–185 and 745–775; these read SDQE…EEAD and KELA…RLRK.

As to expression, expressed in germinal center B-cell and in lymphomas derived from germinal center B-cell.

The protein resides in the nucleus speckle. In terms of biological role, nuclear GTPase found in germinal center B-cells, where it may inhibit function of the activation-induced cytidine deaminase AICDA. Reduces somatic hypermutation in B-cells which may enhance genome stability. This Homo sapiens (Human) protein is Nuclear GTPase SLIP-GC (NUGGC).